The following is a 235-amino-acid chain: Orotidine 5'-phosphate decarboxylase (235 aa).

Substrate is bound by residues aspartate 12, lysine 34, 61-70 (DMKLLDIDNT), threonine 116, arginine 177, glutamine 186, glycine 206, and arginine 207. Lysine 63 serves as the catalytic Proton donor.

Belongs to the OMP decarboxylase family. Type 1 subfamily. Homodimer.

It catalyses the reaction orotidine 5'-phosphate + H(+) = UMP + CO2. It functions in the pathway pyrimidine metabolism; UMP biosynthesis via de novo pathway; UMP from orotate: step 2/2. In terms of biological role, catalyzes the decarboxylation of orotidine 5'-monophosphate (OMP) to uridine 5'-monophosphate (UMP). This Rhizobium johnstonii (strain DSM 114642 / LMG 32736 / 3841) (Rhizobium leguminosarum bv. viciae) protein is Orotidine 5'-phosphate decarboxylase.